Here is a 54-residue protein sequence, read N- to C-terminus: UPF0391 membrane protein RC1_1636 (54 aa).

Helical transmembrane passes span 3–23 and 30–50; these read YWAL…FGGI and IAQI…IMGL.

Belongs to the UPF0391 family.

The protein localises to the cell membrane. The sequence is that of UPF0391 membrane protein RC1_1636 from Rhodospirillum centenum (strain ATCC 51521 / SW).